The sequence spans 211 residues: Ribosomal RNA small subunit methyltransferase G (211 aa).

Residues glycine 73, 126–127 (IE), and arginine 142 contribute to the S-adenosyl-L-methionine site.

Belongs to the methyltransferase superfamily. RNA methyltransferase RsmG family.

Its subcellular location is the cytoplasm. It catalyses the reaction guanosine(527) in 16S rRNA + S-adenosyl-L-methionine = N(7)-methylguanosine(527) in 16S rRNA + S-adenosyl-L-homocysteine. Specifically methylates the N7 position of guanine in position 527 of 16S rRNA. The chain is Ribosomal RNA small subunit methyltransferase G from Methylorubrum populi (strain ATCC BAA-705 / NCIMB 13946 / BJ001) (Methylobacterium populi).